A 571-amino-acid chain; its full sequence is Isocitrate dehydrogenase kinase/phosphatase (571 aa).

ATP is bound by residues 318 to 324 and K339; that span reads APGVRGM. D374 is an active-site residue.

Belongs to the AceK family.

It is found in the cytoplasm. It catalyses the reaction L-seryl-[isocitrate dehydrogenase] + ATP = O-phospho-L-seryl-[isocitrate dehydrogenase] + ADP + H(+). Its function is as follows. Bifunctional enzyme which can phosphorylate or dephosphorylate isocitrate dehydrogenase (IDH) on a specific serine residue. This is a regulatory mechanism which enables bacteria to bypass the Krebs cycle via the glyoxylate shunt in response to the source of carbon. When bacteria are grown on glucose, IDH is fully active and unphosphorylated, but when grown on acetate or ethanol, the activity of IDH declines drastically concomitant with its phosphorylation. The polypeptide is Isocitrate dehydrogenase kinase/phosphatase (Pseudomonas putida (strain ATCC 700007 / DSM 6899 / JCM 31910 / BCRC 17059 / LMG 24140 / F1)).